A 500-amino-acid chain; its full sequence is Intracellular exo-alpha-(1-&gt;5)-L-arabinofuranosidase (500 aa).

Alpha-L-arabinofuranose-binding residues include glutamate 28, asparagine 73, and asparagine 173. The Proton donor/acceptor role is filled by glutamate 174. Residues tyrosine 245, glutamate 293, and glutamine 350 each coordinate alpha-L-arabinofuranose. The Nucleophile role is filled by glutamate 293.

It belongs to the glycosyl hydrolase 51 family. Homohexamer; trimer of dimers.

Its subcellular location is the cytoplasm. The enzyme catalyses Hydrolysis of terminal non-reducing alpha-L-arabinofuranoside residues in alpha-L-arabinosides.. It participates in glycan metabolism; L-arabinan degradation. Its function is as follows. Involved in the degradation of arabinan and is a key enzyme in the complete degradation of the plant cell wall. Catalyzes the cleavage of terminal alpha-(1-&gt;5)-arabinofuranosyl bonds in different hemicellulosic homopolysaccharides (branched and debranched arabinans). This chain is Intracellular exo-alpha-(1-&gt;5)-L-arabinofuranosidase (abfA), found in Halalkalibacterium halodurans (strain ATCC BAA-125 / DSM 18197 / FERM 7344 / JCM 9153 / C-125) (Bacillus halodurans).